Consider the following 261-residue polypeptide: Receptor expression-enhancing protein 4 (261 aa).

Transmembrane regions (helical) follow at residues 1 to 21 (MVSWIISRAVVLVFGLLYPAY) and 35 to 55 (YVRWMMYWIVFALFMTVETFT). The disordered stretch occupies residues 167-261 (YTDALYPDEP…KKPAQSEPEN (95 aa)). The segment covering 221–230 (KSLQRSQSLR) has biased composition (polar residues).

The protein belongs to the DP1 family. In terms of assembly, interacts with microtubules. As to expression, during gastrulation, expressed on the dorsal side of the embryo and then in the neural plate and neural tube. At tailbud stages, expressed in the somites, neural tube and otic vesicle.

It localises to the endoplasmic reticulum membrane. Its function is as follows. Microtubule-binding protein required to ensure proper cell division and nuclear envelope reassembly by sequestering the endoplasmic reticulum away from chromosomes during mitosis. Probably acts by clearing the endoplasmic reticulum membrane from metaphase chromosomes. May play a role in the maintenance of both the nervous system and the musculature. The sequence is that of Receptor expression-enhancing protein 4 (reep4) from Xenopus laevis (African clawed frog).